The primary structure comprises 388 residues: Chorismate synthase (388 aa).

NADP(+) contacts are provided by Arg39 and Arg45. FMN contacts are provided by residues 130–132, 251–252, Gly296, 311–315, and Arg337; these read RSS, NA, and KPIPT.

Belongs to the chorismate synthase family. In terms of assembly, homotetramer. FMNH2 serves as cofactor.

The enzyme catalyses 5-O-(1-carboxyvinyl)-3-phosphoshikimate = chorismate + phosphate. Its pathway is metabolic intermediate biosynthesis; chorismate biosynthesis; chorismate from D-erythrose 4-phosphate and phosphoenolpyruvate: step 7/7. In terms of biological role, catalyzes the anti-1,4-elimination of the C-3 phosphate and the C-6 proR hydrogen from 5-enolpyruvylshikimate-3-phosphate (EPSP) to yield chorismate, which is the branch point compound that serves as the starting substrate for the three terminal pathways of aromatic amino acid biosynthesis. This reaction introduces a second double bond into the aromatic ring system. This Streptococcus pneumoniae (strain ATCC 700669 / Spain 23F-1) protein is Chorismate synthase.